The sequence spans 156 residues: MDSLHVLRSFLLLFIVFNHLPRTTTSMSEPKVITIDVNQAQKLLDSGYTFLDVRTVEEFKKGHVDSENVFNVPYWLYTPQGQEINPNFLKHVSSLCNQTDHLILGCKSGVRSLHATKFLVSSGFKTVRNMDGGYIAWVNKRFPVKVEHKELKYDEL.

A Rhodanese domain is found at 44-146 (LDSGYTFLDV…WVNKRFPVKV (103 aa)). Catalysis depends on Cys-106, which acts as the Cysteine persulfide intermediate.

In Arabidopsis thaliana (Mouse-ear cress), this protein is Rhodanese-like domain-containing protein 17 (STR17).